The following is a 365-amino-acid chain: GTPase Obg (365 aa).

Residues 1–159 (MKFIDEARIE…RMLKLELKVL (159 aa)) enclose the Obg domain. Positions 160–334 (ADVGLLGMPN…LIYAIKDHLQ (175 aa)) constitute an OBG-type G domain. GTP contacts are provided by residues 166 to 173 (GMPNAGKS), 191 to 195 (FTTLH), 213 to 216 (DIPG), 284 to 287 (NKLD), and 315 to 317 (SAL). Mg(2+)-binding residues include Ser173 and Thr193.

It belongs to the TRAFAC class OBG-HflX-like GTPase superfamily. OBG GTPase family. As to quaternary structure, monomer. Mg(2+) is required as a cofactor.

It is found in the cytoplasm. An essential GTPase which binds GTP, GDP and possibly (p)ppGpp with moderate affinity, with high nucleotide exchange rates and a fairly low GTP hydrolysis rate. Plays a role in control of the cell cycle, stress response, ribosome biogenesis and in those bacteria that undergo differentiation, in morphogenesis control. This Cupriavidus taiwanensis (strain DSM 17343 / BCRC 17206 / CCUG 44338 / CIP 107171 / LMG 19424 / R1) (Ralstonia taiwanensis (strain LMG 19424)) protein is GTPase Obg.